A 164-amino-acid polypeptide reads, in one-letter code: Class I hydrophobin rodA (164 aa).

The signal sequence occupies residues 1–18 (MQFSISALVLGLAATVYA). The N-linked (GlcNAc...) asparagine glycan is linked to Asn50. 4 disulfides stabilise this stretch: Cys60/Cys138, Cys68/Cys132, Cys69/Cys109, and Cys139/Cys157.

This sequence belongs to the fungal hydrophobin family. Self-assembles to form functional amyloid fibrils called rodlets. Self-assembly into fibrillar rodlets occurs spontaneously at hydrophobic:hydrophilic interfaces and the rodlets further associate laterally to form amphipathic monolayers.

Its subcellular location is the secreted. The protein localises to the cell wall. Its function is as follows. Aerial growth, conidiation, and dispersal of filamentous fungi in the environment rely upon a capability of their secreting small amphipathic proteins called hydrophobins (HPBs) with low sequence identity. Class I can self-assemble into an outermost layer of rodlet bundles on aerial cell surfaces, conferring cellular hydrophobicity that supports fungal growth, development and dispersal; whereas Class II form highly ordered films at water-air interfaces through intermolecular interactions but contribute nothing to the rodlet structure. RodA is a class I hydrophobin involved in the cell surface hydrophobicity. The surface rodlet layer of the conidial cell wall makes airborne conidia of filamentous fungi inert to both innate and adaptive immunity. This Penicillium camemberti (strain FM 013) protein is Class I hydrophobin rodA.